The sequence spans 271 residues: tRNA (guanine-N(1)-)-methyltransferase (271 aa).

Residues glycine 120 and 145–150 (IGDYVL) each bind S-adenosyl-L-methionine.

This sequence belongs to the RNA methyltransferase TrmD family. As to quaternary structure, homodimer.

It localises to the cytoplasm. The catalysed reaction is guanosine(37) in tRNA + S-adenosyl-L-methionine = N(1)-methylguanosine(37) in tRNA + S-adenosyl-L-homocysteine + H(+). Specifically methylates guanosine-37 in various tRNAs. This is tRNA (guanine-N(1)-)-methyltransferase from Bifidobacterium longum (strain NCC 2705).